Here is a 275-residue protein sequence, read N- to C-terminus: Elongation factor Ts (275 aa).

The interval 76–79 (TDFV) is involved in Mg(2+) ion dislocation from EF-Tu.

This sequence belongs to the EF-Ts family.

It localises to the cytoplasm. Functionally, associates with the EF-Tu.GDP complex and induces the exchange of GDP to GTP. It remains bound to the aminoacyl-tRNA.EF-Tu.GTP complex up to the GTP hydrolysis stage on the ribosome. In Rhodococcus erythropolis (strain PR4 / NBRC 100887), this protein is Elongation factor Ts.